Here is a 283-residue protein sequence, read N- to C-terminus: Lectin subunit alpha (283 aa).

The first 23 residues, 1–23, serve as a signal peptide directing secretion; it reads MSLTMKNVEGFVIFLVIFTSTAA. The C-type lectin domain occupies 51-159; that stretch reads HECARHDQQL…NVKMGYICEP (109 aa). 2 disulfide bridges follow: Cys53-Cys157 and Cys132-Cys149.

Its function is as follows. Role in the defense system of the organism against microorganisms. This lectin binds galactose. The polypeptide is Lectin subunit alpha (Sarcophaga peregrina (Flesh fly)).